The following is a 243-amino-acid chain: MGFEETELRLGLPGNGGTEEVLIRKRGFSETETGHEDESATTVDLMLNLSSKEAATTAAAAADPTDKHKTLPKEKTLLPADPAKPPAKTQVVGWPPVRSFRKNMLAVQKSVGEESEKNSSPNASFVKVSMDGAPYLRKVDLKMYKSYRELSDSLGKMFSSFTFGNCESQGMKDFMNESKLNDLLNSSDYVPTYEDKDGDWMLVGDVPWEMFVESCKRLRIMKGKEAIGLGLAPRAMAKCKNRS.

Positions 8–12 (LRLGL) match the EAR-like (transcriptional repression) motif. The interval 54 to 91 (AATTAAAAADPTDKHKTLPKEKTLLPADPAKPPAKTQV) is disordered. The span at 64–76 (PTDKHKTLPKEKT) shows a compositional bias: basic and acidic residues. Residues 77–89 (LLPADPAKPPAKT) are compositionally biased toward low complexity. A PB1 domain is found at 123-223 (ASFVKVSMDG…SCKRLRIMKG (101 aa)).

This sequence belongs to the Aux/IAA family. As to quaternary structure, homodimers and heterodimers.

The protein localises to the nucleus. Aux/IAA proteins are short-lived transcriptional factors that function as repressors of early auxin response genes at low auxin concentrations. Repression is thought to result from the interaction with auxin response factors (ARFs), proteins that bind to the auxin-responsive promoter element (AuxRE). Formation of heterodimers with ARF proteins may alter their ability to modulate early auxin response genes expression. The sequence is that of Auxin-induced protein AUX28 (AUX28) from Glycine max (Soybean).